The primary structure comprises 467 residues: 3-isopropylmalate dehydratase large subunit (467 aa).

[4Fe-4S] cluster contacts are provided by Cys-348, Cys-409, and Cys-412. The disordered stretch occupies residues 423 to 449 (NERSISTSNRNFEGRQGKGSRTHLASP).

It belongs to the aconitase/IPM isomerase family. LeuC type 1 subfamily. In terms of assembly, heterodimer of LeuC and LeuD. [4Fe-4S] cluster is required as a cofactor.

It catalyses the reaction (2R,3S)-3-isopropylmalate = (2S)-2-isopropylmalate. It participates in amino-acid biosynthesis; L-leucine biosynthesis; L-leucine from 3-methyl-2-oxobutanoate: step 2/4. Its function is as follows. Catalyzes the isomerization between 2-isopropylmalate and 3-isopropylmalate, via the formation of 2-isopropylmaleate. The chain is 3-isopropylmalate dehydratase large subunit from Bifidobacterium longum subsp. infantis (strain ATCC 15697 / DSM 20088 / JCM 1222 / NCTC 11817 / S12).